The primary structure comprises 1720 residues: 6-methylcalicylic acide synthase (1720 aa).

Residues 1-31 (MDKQSASGEIPAMRWEPYHRRDPRNAKELSK) form a disordered region. Residues 1 to 399 (MDKQSASGEI…GTVSHAVIEQ (399 aa)) form the Ketosynthase family 3 (KS3) domain. Positions 16 to 30 (EPYHRRDPRNAKELS) are enriched in basic and acidic residues. Active-site for beta-ketoacyl synthase activity residues include cysteine 146, histidine 281, and histidine 321. The interval 509–823 (VWVFSGHGAQ…IAQLHCRGAE (315 aa)) is malonyl-CoA:ACP transacylase (MAT) domain. Residues 868–987 (HTLLGQRIGI…AYWARDIQEA (120 aa)) are N-terminal hotdog fold. The interval 868–1139 (HTLLGQRIGI…FTAMRFSEIE (272 aa)) is dehydratase (DH) domain. The PKS/mFAS DH domain occupies 868 to 1144 (HTLLGQRIGI…FSEIEGTPGV (277 aa)). Histidine 900 acts as the Proton acceptor; for dehydratase activity in catalysis. A C-terminal hotdog fold region spans residues 1001–1144 (GTRIRDDFSI…FSEIEGTPGV (144 aa)). The Proton donor; for dehydratase activity role is filled by aspartate 1065. Residues 1148 to 1545 (MESLVHQLAW…AVAVQWTSWR (398 aa)) form a product template (PT) domain region. The region spanning 1644–1718 (VYLDEKIRGC…HLVGWFAEKV (75 aa)) is the Carrier domain. The residue at position 1678 (serine 1678) is an O-(pantetheine 4'-phosphoryl)serine.

It localises to the cytoplasm. Its subcellular location is the cytosol. It carries out the reaction 3 malonyl-CoA + acetyl-CoA + NADPH + 3 H(+) = 6-methylsalicylate + 3 CO2 + NADP(+) + 4 CoA + H2O. It participates in mycotoxin biosynthesis; patulin biosynthesis. In terms of biological role, 6-methylsalicylic acid synthase; part of the gene cluster that mediates the biosynthesis of patulin, an acetate-derived tetraketide mycotoxin produced by several fungal species that shows antimicrobial properties against several bacteria. PatK catalyzes the first step of the pathway which is the synthesis of 6-methylsalicylic acid via condensation of 1 acetate and 3 malonate units. The pathway begins with the synthesis of 6-methylsalicylic acid by the polyketide synthase (PKS) patK via condensation of acetate and malonate units. The 6-methylsalicylic acid decarboxylase patG then catalyzes the decarboxylation of 6-methylsalicylic acid to yield m-cresol (also known as 3-methylphenol). These first reactions occur in the cytosol. The intermediate m-cresol is then transported into the endoplasmic reticulum where the cytochrome P450 monooxygenase patH converts it to m-hydroxybenzyl alcohol, which is further converted to gentisyl alcohol by the cytochrome P450 monooxygenase patI. The oxidoreductases patJ and patO further convert gentisyl alcohol to isoepoxydon in the vacuole. PatN catalyzes then the transformation of isoepoxydon into phyllostine. The cluster protein patF is responsible for the conversion from phyllostine to neopatulin whereas the alcohol dehydrogenase patD converts neopatulin to E-ascladiol. The steps between isoepoxydon and E-ascladiol occur in the cytosol, and E-ascladiol is probably secreted to the extracellular space by one of the cluster-specific transporters patC or patM. Finally, the secreted patulin synthase patE catalyzes the conversion of E-ascladiol to patulin. The polypeptide is 6-methylcalicylic acide synthase (Aspergillus clavatus (strain ATCC 1007 / CBS 513.65 / DSM 816 / NCTC 3887 / NRRL 1 / QM 1276 / 107)).